The primary structure comprises 124 residues: Bactoprenol-linked glucose translocase (124 aa).

Helical transmembrane passes span 12-32 (FFSY…VFYA), 45-65 (NIVG…RCSF), 75-95 (FIFI…FDLL), and 96-116 (ALSP…LGYC).

This sequence belongs to the GtrA family.

The protein localises to the cell membrane. Its pathway is bacterial outer membrane biogenesis; lipopolysaccharide biosynthesis. In terms of biological role, involved in O antigen modification. Involved in the translocation of bactoprenol-linked glucose across the cytoplasmic membrane. The chain is Bactoprenol-linked glucose translocase (rfbI) from Shigella flexneri.